We begin with the raw amino-acid sequence, 79 residues long: UPF0181 protein PC1_1931 (79 aa).

Residues 54-79 are disordered; sequence FDEDDDTVNDSDEEHYFDDGEEEDEQ.

The protein belongs to the UPF0181 family.

The protein is UPF0181 protein PC1_1931 of Pectobacterium carotovorum subsp. carotovorum (strain PC1).